Here is a 296-residue protein sequence, read N- to C-terminus: Protoheme IX farnesyltransferase (296 aa).

9 helical membrane-spanning segments follow: residues 27–47, 48–68, 98–118, 120–140, 148–168, 175–195, 219–239, 242–262, and 274–294; these read IMYL…GTIH, PLIG…AGAL, ALEC…LTVN, VSAI…TMVL, IVIG…SVTG, LLLF…LSLL, HIMG…LYVA, VLYE…AYCL, and CMGL…AIAL.

The protein belongs to the UbiA prenyltransferase family. Protoheme IX farnesyltransferase subfamily.

It localises to the cell inner membrane. The enzyme catalyses heme b + (2E,6E)-farnesyl diphosphate + H2O = Fe(II)-heme o + diphosphate. The protein operates within porphyrin-containing compound metabolism; heme O biosynthesis; heme O from protoheme: step 1/1. Converts heme B (protoheme IX) to heme O by substitution of the vinyl group on carbon 2 of heme B porphyrin ring with a hydroxyethyl farnesyl side group. The chain is Protoheme IX farnesyltransferase from Anaplasma phagocytophilum (strain HZ).